Consider the following 190-residue polypeptide: Threonylcarbamoyl-AMP synthase (190 aa).

Residues Phe-9–Arg-190 enclose the YrdC-like domain.

This sequence belongs to the SUA5 family. TsaC subfamily.

Its subcellular location is the cytoplasm. The catalysed reaction is L-threonine + hydrogencarbonate + ATP = L-threonylcarbamoyladenylate + diphosphate + H2O. Its function is as follows. Required for the formation of a threonylcarbamoyl group on adenosine at position 37 (t(6)A37) in tRNAs that read codons beginning with adenine. Catalyzes the conversion of L-threonine, HCO(3)(-)/CO(2) and ATP to give threonylcarbamoyl-AMP (TC-AMP) as the acyladenylate intermediate, with the release of diphosphate. This chain is Threonylcarbamoyl-AMP synthase, found in Marinobacter nauticus (strain ATCC 700491 / DSM 11845 / VT8) (Marinobacter aquaeolei).